Consider the following 232-residue polypeptide: Ion-translocating oxidoreductase complex subunit E (232 aa).

5 consecutive transmembrane segments (helical) span residues Leu-39 to Leu-59, Ile-69 to Ala-89, Phe-92 to Val-112, Ala-125 to Leu-145, and Pro-182 to Val-202.

This sequence belongs to the NqrDE/RnfAE family. In terms of assembly, the complex is composed of six subunits: RnfA, RnfB, RnfC, RnfD, RnfE and RnfG.

It is found in the cell inner membrane. In terms of biological role, part of a membrane-bound complex that couples electron transfer with translocation of ions across the membrane. This Klebsiella pneumoniae (strain 342) protein is Ion-translocating oxidoreductase complex subunit E.